Reading from the N-terminus, the 123-residue chain is Protein Wnt-7a (123 aa).

Residue serine 1 is the site of O-palmitoleoyl serine; by PORCN attachment. The segment at valine 33–threonine 61 is disordered linker. A disulfide bond links cysteine 89 and cysteine 104. Residues asparagine 90 and asparagine 96 are each glycosylated (N-linked (GlcNAc...) asparagine).

It belongs to the Wnt family. As to quaternary structure, forms a soluble 1:1 complex with AFM; this prevents oligomerization and is required for prolonged biological activity. The complex with AFM may represent the physiological form in body fluids. Interacts with FZD5. Interacts with PORCN. Post-translationally, palmitoleoylation is required for efficient binding to frizzled receptors. Depalmitoleoylation leads to Wnt signaling pathway inhibition.

It is found in the secreted. It localises to the extracellular space. The protein localises to the extracellular matrix. Ligand for members of the frizzled family of seven transmembrane receptors that functions in the canonical Wnt/beta-catenin signaling pathway. Plays an important role in embryonic development, including dorsal versus ventral patterning during limb development, skeleton development and urogenital tract development. Required for central nervous system (CNS) angiogenesis and blood-brain barrier regulation. The polypeptide is Protein Wnt-7a (WNT-7A) (Alopias vulpinus (Common thresher shark)).